Here is a 296-residue protein sequence, read N- to C-terminus: Nucleotide-binding protein SEQ_0857 (296 aa).

13-20 is a binding site for ATP; the sequence is GMSGAGKT. 63–66 contacts GTP; it reads DMRS.

It belongs to the RapZ-like family.

Displays ATPase and GTPase activities. The chain is Nucleotide-binding protein SEQ_0857 from Streptococcus equi subsp. equi (strain 4047).